Here is a 357-residue protein sequence, read N- to C-terminus: UPF0283 membrane protein BOV_0999 (357 aa).

Positions 1-36 (MSDKTPRKPTAFRLEQPARVSAASEQEEPRRPRAVK) are disordered. Positions 27–36 (EEPRRPRAVK) are enriched in basic and acidic residues. The next 2 membrane-spanning stretches (helical) occupy residues 78–98 (ILFG…TEDL) and 109–129 (LGWT…AIIL).

Belongs to the UPF0283 family.

It is found in the cell inner membrane. The chain is UPF0283 membrane protein BOV_0999 from Brucella ovis (strain ATCC 25840 / 63/290 / NCTC 10512).